A 341-amino-acid polypeptide reads, in one-letter code: MSDRISIIGGGSWGTAIAYLLAINGKKVLMYVRDNNQKDSINKKRVNNKYFPDHQLPEGIEATTDIKEVVSFSNIVFLAVPTHATRAVMKKINHLLNEEQILVSTAKGIEEVNFLRNSQIIKEYCNNKIAVLSGPTHAEEVIDGLPTAVVVASRDKEVAESIQDIMMSSTFRVYTNPDVVGVEMGGAVKNIIAVAAGIADGLGYGDNTMAALITRGLHEMSRLGVHFGGKLLTFAGLAGMGDLVVTCTSNHSRNRRFGIKVGKGMNTEEALSSVNQVVEGVRTTRAVYDWYQGKKLNFELPITSQIYQVLFNDKNPLDAVNELMLRGPKHEIEEVVDDVNW.

Residues Ser12, Trp13, Arg33, and Lys107 each contribute to the NADPH site. Residues Lys107, Gly134, and Thr136 each coordinate sn-glycerol 3-phosphate. Residue Ala138 participates in NADPH binding. Sn-glycerol 3-phosphate-binding residues include Lys189, Asp242, Ser252, Arg253, and Asn254. Lys189 serves as the catalytic Proton acceptor. Arg253 is a binding site for NADPH. Positions 277 and 279 each coordinate NADPH.

Belongs to the NAD-dependent glycerol-3-phosphate dehydrogenase family.

The protein localises to the cytoplasm. The enzyme catalyses sn-glycerol 3-phosphate + NAD(+) = dihydroxyacetone phosphate + NADH + H(+). It catalyses the reaction sn-glycerol 3-phosphate + NADP(+) = dihydroxyacetone phosphate + NADPH + H(+). It participates in membrane lipid metabolism; glycerophospholipid metabolism. In terms of biological role, catalyzes the reduction of the glycolytic intermediate dihydroxyacetone phosphate (DHAP) to sn-glycerol 3-phosphate (G3P), the key precursor for phospholipid synthesis. This is Glycerol-3-phosphate dehydrogenase [NAD(P)+] from Halothermothrix orenii (strain H 168 / OCM 544 / DSM 9562).